The sequence spans 309 residues: DSC E3 ubiquitin ligase complex subunit C (309 aa).

Residue asparagine 61 is glycosylated (N-linked (GlcNAc...) asparagine). 2 disordered regions span residues 88 to 110 (LPPS…GKGK) and 148 to 177 (EQAD…FDRL). Helical transmembrane passes span 257–277 (DDML…AMWL) and 289–309 (GLAV…RIMN).

The protein belongs to the dsc3 family. As to quaternary structure, component of the DSC E3 ubiquitin ligase complex composed of dscA, dscB, dscC and dscD.

It localises to the endoplasmic reticulum membrane. Its pathway is protein modification; protein ubiquitination. In terms of biological role, component of the DSC E3 ubiquitin ligase complex which is required for the srbA transcriptional activator proteolytic cleavage to release the soluble transcription factor from the membrane in low oxygen or sterol conditions. Required for growth during hypoxia and triazole drug susceptibility, as well as for virulence in a murine model of invasive pulmonary aspergillosis (IPA). In Aspergillus fumigatus (strain ATCC MYA-4609 / CBS 101355 / FGSC A1100 / Af293) (Neosartorya fumigata), this protein is DSC E3 ubiquitin ligase complex subunit C.